A 203-amino-acid chain; its full sequence is Ribosome maturation factor RimP (203 aa).

Residues 1 to 21 (MSDSEATTSTDRSESNSTATI) show a composition bias toward polar residues. The disordered stretch occupies residues 1 to 23 (MSDSEATTSTDRSESNSTATIHN).

Belongs to the RimP family.

The protein localises to the cytoplasm. In terms of biological role, required for maturation of 30S ribosomal subunits. In Paenarthrobacter aurescens (strain TC1), this protein is Ribosome maturation factor RimP.